Here is a 488-residue protein sequence, read N- to C-terminus: Bifunctional protein GlmU (488 aa).

A pyrophosphorylase region spans residues 1–237 (MPRTRTPLAA…VEEASGVNDR (237 aa)). Residues 13-16 (LAAG), Lys27, Gln82, 87-88 (GT), 110-112 (SGD), Gly149, Glu164, Asn179, and Asn235 each bind UDP-N-acetyl-alpha-D-glucosamine. Asp112 lines the Mg(2+) pocket. Asn235 lines the Mg(2+) pocket. The interval 238–258 (VELSRANRVMVGRLAEAFMRA) is linker. The segment at 259–488 (GVTIEDPARF…KGRPAARRAS (230 aa)) is N-acetyltransferase. UDP-N-acetyl-alpha-D-glucosamine is bound by residues Arg341 and Lys359. Residue His371 is the Proton acceptor of the active site. UDP-N-acetyl-alpha-D-glucosamine is bound by residues Tyr374 and Asn385. Residues Ala388, 394–395 (NY), Ser413, Ala431, and Arg448 each bind acetyl-CoA. Residues 459-488 (AQRQAEKQMKGTATGPASARKGRPAARRAS) are disordered. Positions 478 to 488 (RKGRPAARRAS) are enriched in basic residues.

This sequence in the N-terminal section; belongs to the N-acetylglucosamine-1-phosphate uridyltransferase family. In the C-terminal section; belongs to the transferase hexapeptide repeat family. Homotrimer. Mg(2+) is required as a cofactor.

It is found in the cytoplasm. The enzyme catalyses alpha-D-glucosamine 1-phosphate + acetyl-CoA = N-acetyl-alpha-D-glucosamine 1-phosphate + CoA + H(+). It carries out the reaction N-acetyl-alpha-D-glucosamine 1-phosphate + UTP + H(+) = UDP-N-acetyl-alpha-D-glucosamine + diphosphate. Its pathway is nucleotide-sugar biosynthesis; UDP-N-acetyl-alpha-D-glucosamine biosynthesis; N-acetyl-alpha-D-glucosamine 1-phosphate from alpha-D-glucosamine 6-phosphate (route II): step 2/2. The protein operates within nucleotide-sugar biosynthesis; UDP-N-acetyl-alpha-D-glucosamine biosynthesis; UDP-N-acetyl-alpha-D-glucosamine from N-acetyl-alpha-D-glucosamine 1-phosphate: step 1/1. It participates in bacterial outer membrane biogenesis; LPS lipid A biosynthesis. Catalyzes the last two sequential reactions in the de novo biosynthetic pathway for UDP-N-acetylglucosamine (UDP-GlcNAc). The C-terminal domain catalyzes the transfer of acetyl group from acetyl coenzyme A to glucosamine-1-phosphate (GlcN-1-P) to produce N-acetylglucosamine-1-phosphate (GlcNAc-1-P), which is converted into UDP-GlcNAc by the transfer of uridine 5-monophosphate (from uridine 5-triphosphate), a reaction catalyzed by the N-terminal domain. The sequence is that of Bifunctional protein GlmU from Anaeromyxobacter sp. (strain K).